The following is a 145-amino-acid chain: Deoxyuridine 5'-triphosphate nucleotidohydrolase (145 aa).

Residues R65–G67, N78, T82–D84, and K92 each bind substrate.

It belongs to the dUTPase family. The cofactor is Mg(2+).

It catalyses the reaction dUTP + H2O = dUMP + diphosphate + H(+). Its pathway is pyrimidine metabolism; dUMP biosynthesis; dUMP from dCTP (dUTP route): step 2/2. This enzyme is involved in nucleotide metabolism: it produces dUMP, the immediate precursor of thymidine nucleotides and it decreases the intracellular concentration of dUTP so that uracil cannot be incorporated into DNA. In Syntrophomonas wolfei subsp. wolfei (strain DSM 2245B / Goettingen), this protein is Deoxyuridine 5'-triphosphate nucleotidohydrolase.